The following is a 118-amino-acid chain: Large ribosomal subunit protein uL24 (118 aa).

The protein belongs to the universal ribosomal protein uL24 family. As to quaternary structure, part of the 50S ribosomal subunit.

Functionally, one of two assembly initiator proteins, it binds directly to the 5'-end of the 23S rRNA, where it nucleates assembly of the 50S subunit. In terms of biological role, one of the proteins that surrounds the polypeptide exit tunnel on the outside of the subunit. This is Large ribosomal subunit protein uL24 from Prochlorococcus marinus (strain MIT 9313).